We begin with the raw amino-acid sequence, 392 residues long: uncharacterized protein (392 aa).

10 helical membrane-spanning segments follow: residues 2–23 (WLAN…SLYI), 38–60 (SGYV…GRFG), 73–95 (GTGI…LFFL), 153–175 (FTYT…LFGV), 195–217 (VLSY…LIQT), 237–259 (VNLA…LLAR), 272–291 (RILI…QALA), 297–319 (LLVF…TAAI), 331–353 (VLGY…GGII), and 357–379 (FTIS…MLWI).

Belongs to the major facilitator superfamily.

The protein localises to the cell membrane. This is an uncharacterized protein from Bacillus subtilis (strain 168).